Reading from the N-terminus, the 411-residue chain is ATP-dependent Clp protease ATP-binding subunit ClpX (411 aa).

The 49-residue stretch at 1–49 folds into the ClpX-type ZB domain; it reads MSDRDIRCSFCGRTQKEVKKLIAGPGVYICDECVKLAYDIIEEDEEEDV. The Zn(2+) site is built by C8, C11, C30, and C33. Position 115–122 (115–122) interacts with ATP; the sequence is PTGVGKTL.

This sequence belongs to the ClpX chaperone family. As to quaternary structure, component of the ClpX-ClpP complex. Forms a hexameric ring that, in the presence of ATP, binds to fourteen ClpP subunits assembled into a disk-like structure with a central cavity, resembling the structure of eukaryotic proteasomes.

Functionally, ATP-dependent specificity component of the Clp protease. It directs the protease to specific substrates. Can perform chaperone functions in the absence of ClpP. The protein is ATP-dependent Clp protease ATP-binding subunit ClpX of Dictyoglomus thermophilum (strain ATCC 35947 / DSM 3960 / H-6-12).